Here is a 463-residue protein sequence, read N- to C-terminus: Glutamate--tRNA ligase 1 (463 aa).

The 'HIGH' region signature appears at 10–20 (PSPTGYLHIGG). Positions 238-242 (KLSKR) match the 'KMSKS' region motif. Lys241 serves as a coordination point for ATP.

This sequence belongs to the class-I aminoacyl-tRNA synthetase family. Glutamate--tRNA ligase type 1 subfamily. As to quaternary structure, monomer.

It localises to the cytoplasm. The enzyme catalyses tRNA(Glu) + L-glutamate + ATP = L-glutamyl-tRNA(Glu) + AMP + diphosphate. Functionally, catalyzes the attachment of glutamate to tRNA(Glu) in a two-step reaction: glutamate is first activated by ATP to form Glu-AMP and then transferred to the acceptor end of tRNA(Glu). The protein is Glutamate--tRNA ligase 1 of Helicobacter pylori (strain J99 / ATCC 700824) (Campylobacter pylori J99).